The sequence spans 601 residues: MTTVPISNIRNFSIVAHIDHGKSTLADRLIQTTGGLQAREMKEQVLDSMDIERERGITIKAQTVRLNYHAQDGRDYIFNLMDTPGHVDFAYEVSRSLAACEGSLLVVDASQGVEAQTLANVYHALDAGHEIVPVLNKVDLPAAEPEQVRQQIEDVIGIDASEAVMISAKTGLGIDLVLEAIVHRLPPPQGDREAPLKALLVDSWYDVYLGVVVLVRVVDGVMKKGQRIRMMGTNAAYDLERVGFFTPKMTQVDELGPGEIGFITAGIKEVADTRVGDTITDDKKPVTEMLPGFKPAVPVVFCGLFPVDADDFETLRAAMGKLRLNDASFSFEMETSAALGFGFRCGFLGLLHLEIIQERLSREFDLNLIATAPSVIYKMHLTDGTELEIHNPIDMPDVVKIAEIQEPWIEATILTPDEYLGSVLKLCQDRRGTQKELTYVGSRAMVKYNLPLNEVVFDFYDRLKSVSKGYASFDYHLTDYQPADLVKMQILVNAEPVDALSMLVHRTRAEGRGRAMVEKMKELIPPHMFVIPIQAAIGGKIIARETVRALRKDVTAKCYGGDITRKRKLLEKQKEGKKKMRQFGKVDIPQEAFIAALKVDS.

The region spanning 7-189 (SNIRNFSIVA…AIVHRLPPPQ (183 aa)) is the tr-type G domain. GTP is bound by residues 19 to 24 (DHGKST) and 136 to 139 (NKVD).

This sequence belongs to the TRAFAC class translation factor GTPase superfamily. Classic translation factor GTPase family. LepA subfamily.

The protein localises to the cell inner membrane. The catalysed reaction is GTP + H2O = GDP + phosphate + H(+). Its function is as follows. Required for accurate and efficient protein synthesis under certain stress conditions. May act as a fidelity factor of the translation reaction, by catalyzing a one-codon backward translocation of tRNAs on improperly translocated ribosomes. Back-translocation proceeds from a post-translocation (POST) complex to a pre-translocation (PRE) complex, thus giving elongation factor G a second chance to translocate the tRNAs correctly. Binds to ribosomes in a GTP-dependent manner. This Rhodopseudomonas palustris (strain BisB18) protein is Elongation factor 4.